The following is a 5255-amino-acid chain: Bacitracin synthase 1 (5255 aa).

The segment at 39–612 (LHELFEEQAM…IKELSAFIEA (574 aa)) is domain 1 (isoleucine-activating). Residues 519-531 (VDRKALPEPDRTA) show a composition bias toward basic and acidic residues. The tract at residues 519–542 (VDRKALPEPDRTAGAENEYEAPRN) is disordered. Residues 539–614 (APRNETEEKL…ELSAFIEANH (76 aa)) form the Carrier 1 domain. The residue at position 574 (S574) is an O-(pantetheine 4'-phosphoryl)serine. The segment at 621 to 1037 (TLVTRAADPE…ITWDYVEQIF (417 aa)) is cyclization. The tract at residues 1109–1648 (HHDEVMTYQE…FKNDTIIALD (540 aa)) is domain 2 (cysteine-activating). Carrier domains follow at residues 1580–1655 (LPEN…KNRE), 2616–2691 (APRD…VRRR), 3659–3733 (PPRN…TEET), and 5166–5241 (APRN…LTAE). O-(pantetheine 4'-phosphoryl)serine occurs at positions 1615, 2651, 3694, and 5201. Positions 2124–2689 (GKAIHQLFEE…IKGLRDISVR (566 aa)) are domain 3 (leucine-activating). The interval 3164-3732 (DHPAVAFGDE…KDLSRFITEE (569 aa)) is domain 4 (glutamine-activating). Residues 4668–5249 (LHELFEEQAM…AEAESAVSEE (582 aa)) are domain 5 (isoleucine-activating).

This sequence belongs to the ATP-dependent AMP-binding enzyme family. In terms of assembly, large multienzyme complex of BA1, BA2 and BA3. The cofactor is pantetheine 4'-phosphate.

The enzyme catalyses L-glutamate = D-glutamate. The protein operates within antibiotic biosynthesis; bacitracin biosynthesis. In terms of biological role, activates five amino acids, incorporates two D-amino acids, releases and cyclizes the mature bacitracin. The sequence is that of Bacitracin synthase 1 (bacA) from Bacillus licheniformis.